The primary structure comprises 462 residues: GTPase Der (462 aa).

EngA-type G domains follow at residues 3–166 (PVIA…TTET) and 175–348 (IKIA…HSAI). GTP-binding positions include 9-16 (GRPNVGKS), 56-60 (DTGGI), 118-121 (NKTD), 181-188 (GRPNVGKS), 228-232 (DTAGV), and 293-296 (NKWD). The KH-like domain maps to 349–433 (QSFSTPKLTR…PLKIEFKGGQ (85 aa)).

The protein belongs to the TRAFAC class TrmE-Era-EngA-EngB-Septin-like GTPase superfamily. EngA (Der) GTPase family. As to quaternary structure, associates with the 50S ribosomal subunit.

In terms of biological role, GTPase that plays an essential role in the late steps of ribosome biogenesis. The chain is GTPase Der from Legionella pneumophila (strain Paris).